The following is a 569-amino-acid chain: Protein ste7 (569 aa).

2 disordered regions span residues 195 to 219 and 255 to 274; these read APIT…VNSV and FSVS…SPPI. Residues 198 to 219 show a composition bias toward low complexity; that stretch reads TTSSATHTSQFSTSSSSSVNSV. Pro residues predominate over residues 264–274; sequence PQTPISMSPPI.

It belongs to the arrestin family.

Functionally, has a role in promoting meiosis whereby it is involved in establishing the mating pheromone signaling pathway. It also has a role in suppressing meiosis until the conjugation process is complete. This Schizosaccharomyces pombe (strain 972 / ATCC 24843) (Fission yeast) protein is Protein ste7 (ste7).